The following is a 391-amino-acid chain: 12-oxophytodienoate reductase 3 (391 aa).

Residue M1 is modified to N-acetylmethionine. T2 is modified (N-acetylthreonine; in 12-oxophytodienoate reductase 3, N-terminally processed). FMN is bound by residues 31–33 (PMT), G64, and Q106. Residue H186 coordinates substrate. Residue Y191 is the Proton donor of the active site. Residue R238 participates in FMN binding. R284 contributes to the substrate binding site. FMN is bound by residues 320–322 (SGG) and 343–344 (GR). A Microbody targeting signal motif is present at residues 389-391 (SRL).

The protein belongs to the NADH:flavin oxidoreductase/NADH oxidase family. Requires FMN as cofactor. In terms of tissue distribution, expressed in green seedling, leaves, flowers (anthers, pistil, petal and stamen), and to a lower extent in roots and siliques. Specifically expressed in filament during anther dehiscence initiation.

It is found in the peroxisome. The catalysed reaction is (1S,2S)-OPC-8 + NADP(+) = (9S,13S,15Z)-12-oxophyto-10,15-dienoate + NADPH + H(+). Its pathway is lipid metabolism; oxylipin biosynthesis. Specifically cleaves olefinic bonds in cyclic enones. Involved in the biosynthesis of jasmonic acid (JA) and perhaps in biosynthesis or metabolism of other oxylipin signaling moleclules. Required for the spatial and temporal regulation of JA levels during dehiscence of anthers, promoting the stomium degeneration program. In vitro, reduces 9S,13S-12-oxophytodienoic acid (9S,13S-OPDA) and 9R,13R-OPDA to 9S,13S-OPC-8:0 and 9R,13R-OPC-8:0, respectively. Can detoxify the explosive 2,4,6-trinitrotoluene (TNT) in vitro by catalyzing its nitroreduction to form hydroxylamino-dinitrotoluene (HADNT). This chain is 12-oxophytodienoate reductase 3, found in Arabidopsis thaliana (Mouse-ear cress).